The primary structure comprises 100 residues: Large ribosomal subunit protein uL23 (100 aa).

This sequence belongs to the universal ribosomal protein uL23 family. In terms of assembly, part of the 50S ribosomal subunit. Contacts protein L29, and trigger factor when it is bound to the ribosome.

Its function is as follows. One of the early assembly proteins it binds 23S rRNA. One of the proteins that surrounds the polypeptide exit tunnel on the outside of the ribosome. Forms the main docking site for trigger factor binding to the ribosome. The chain is Large ribosomal subunit protein uL23 from Pectobacterium atrosepticum (strain SCRI 1043 / ATCC BAA-672) (Erwinia carotovora subsp. atroseptica).